A 246-amino-acid chain; its full sequence is tRNA1(Val) (adenine(37)-N6)-methyltransferase (246 aa).

This sequence belongs to the methyltransferase superfamily. tRNA (adenine-N(6)-)-methyltransferase family.

Its subcellular location is the cytoplasm. The enzyme catalyses adenosine(37) in tRNA1(Val) + S-adenosyl-L-methionine = N(6)-methyladenosine(37) in tRNA1(Val) + S-adenosyl-L-homocysteine + H(+). In terms of biological role, specifically methylates the adenine in position 37 of tRNA(1)(Val) (anticodon cmo5UAC). The protein is tRNA1(Val) (adenine(37)-N6)-methyltransferase of Shewanella halifaxensis (strain HAW-EB4).